Consider the following 1249-residue polypeptide: ATP-dependent helicase/nuclease subunit A (1249 aa).

One can recognise a UvrD-like helicase ATP-binding domain in the interval 5 to 482 (TNYTPSQQAV…IVLAENFRSV (478 aa)). Residue 26–33 (ASAGSGKT) participates in ATP binding. The region spanning 521-811 (ADMPQTTNLL…NVMTIHGSKG (291 aa)) is the UvrD-like helicase C-terminal domain.

Belongs to the helicase family. AddA subfamily. Heterodimer of AddA and AddB/RexB. It depends on Mg(2+) as a cofactor.

It catalyses the reaction Couples ATP hydrolysis with the unwinding of duplex DNA by translocating in the 3'-5' direction.. The enzyme catalyses ATP + H2O = ADP + phosphate + H(+). Functionally, the heterodimer acts as both an ATP-dependent DNA helicase and an ATP-dependent, dual-direction single-stranded exonuclease. Recognizes the chi site generating a DNA molecule suitable for the initiation of homologous recombination. The AddA nuclease domain is required for chi fragment generation; this subunit has the helicase and 3' -&gt; 5' nuclease activities. The polypeptide is ATP-dependent helicase/nuclease subunit A (Lactiplantibacillus plantarum (strain ATCC BAA-793 / NCIMB 8826 / WCFS1) (Lactobacillus plantarum)).